The following is a 1062-amino-acid chain: Valine--tRNA ligase, mitochondrial (1062 aa).

The N-terminal 15 residues, Met1–Gly15, are a transit peptide targeting the mitochondrion. Residues Met1–Thr73 are disordered. Over residues Arg42–Ala56 the composition is skewed to basic and acidic residues. The 'HIGH' region signature appears at Pro146–His156. The 'KMSKS' region motif lies at Lys659–Ser663. Position 662 (Lys662) interacts with ATP.

The protein belongs to the class-I aminoacyl-tRNA synthetase family.

It localises to the mitochondrion. It carries out the reaction tRNA(Val) + L-valine + ATP = L-valyl-tRNA(Val) + AMP + diphosphate. Catalyzes the attachment of valine to tRNA(Val) in a two-step reaction: valine is first activated by ATP to form Val-AMP and then transferred to the acceptor end of tRNA(Val). This chain is Valine--tRNA ligase, mitochondrial (VARS2), found in Sus scrofa (Pig).